A 604-amino-acid polypeptide reads, in one-letter code: Procollagen galactosyltransferase 1 (604 aa).

Residues 1-18 (MHLLCFFFLLLWTGPARS) form the signal peptide. 4 N-linked (GlcNAc...) asparagine glycosylation sites follow: Asn78, Asn166, Asn363, and Asn561. Basic and acidic residues predominate over residues 570-580 (RARSRKSREQE). The interval 570 to 604 (RARSRKSREQEELSSEAQNTDVLQSPLDSTARDEL) is disordered. Residues 584-597 (SEAQNTDVLQSPLD) are compositionally biased toward polar residues. The Prevents secretion from ER signature appears at 601-604 (RDEL).

The protein belongs to the glycosyltransferase 25 family.

It localises to the endoplasmic reticulum lumen. It carries out the reaction (5R)-5-hydroxy-L-lysyl-[collagen] + UDP-alpha-D-galactose = (5R)-5-O-(beta-D-galactosyl)-5-hydroxy-L-lysyl-[collagen] + UDP + H(+). Functionally, beta-galactosyltransferase that transfers beta-galactose to hydroxylysine residues of type I collagen. By acting on collagen glycosylation, facilitates the formation of collagen triple helix. The sequence is that of Procollagen galactosyltransferase 1 (colgalt1) from Danio rerio (Zebrafish).